The chain runs to 137 residues: Acidic phospholipase A2 beta-bungarotoxin A chain (137 aa).

Residues 1–9 (AVCVSLLGA) form the signal peptide. Positions 10-17 (ANIPPHPL) are excised as a propeptide. 6 disulfide bridges follow: Cys-44/Cys-136, Cys-46/Cys-62, Cys-61/Cys-117, Cys-68/Cys-110, Cys-78/Cys-103, and Cys-96/Cys-108. Residues Tyr-45, Gly-47, and Gly-49 each coordinate Ca(2+). His-65 is an active-site residue. Ca(2+) is bound at residue Asp-66. The active site involves Asp-111.

The protein belongs to the phospholipase A2 family. Group I subfamily. D49 sub-subfamily. In terms of assembly, heterodimer; disulfide-linked. The A chain has phospholipase A2 activity and the B chain shows homology with the basic protease inhibitors. Requires Ca(2+) as cofactor. Expressed by the venom gland.

It localises to the secreted. The enzyme catalyses a 1,2-diacyl-sn-glycero-3-phosphocholine + H2O = a 1-acyl-sn-glycero-3-phosphocholine + a fatty acid + H(+). In terms of biological role, beta bungarotoxin is a presynaptic neurotoxin. The A chain has phospholipase activity. PLA2 catalyzes the calcium-dependent hydrolysis of the 2-acyl groups in 3-sn-phosphoglycerides. This chain is Acidic phospholipase A2 beta-bungarotoxin A chain, found in Bungarus candidus (Malayan krait).